Reading from the N-terminus, the 500-residue chain is Probable malate:quinone oxidoreductase (500 aa).

The protein belongs to the MQO family. FAD is required as a cofactor.

It catalyses the reaction (S)-malate + a quinone = a quinol + oxaloacetate. It participates in carbohydrate metabolism; tricarboxylic acid cycle; oxaloacetate from (S)-malate (quinone route): step 1/1. This is Probable malate:quinone oxidoreductase from Bacillus cereus (strain ZK / E33L).